The sequence spans 340 residues: Beta-1,3-N-acetylglucosaminyltransferase radical fringe (340 aa).

At 1–4 (MKIT) the chain is on the cytoplasmic side. Residues 5–25 (YVGLIKVCFLVFLLLCATVLL) form a helical; Signal-anchor for type II membrane protein membrane-spanning segment. At 26-340 (NISWRQRDSS…AFSLAEDPTR (315 aa)) the chain is on the lumenal side. N42 carries an N-linked (GlcNAc...) asparagine glycan. Residue R110 participates in substrate binding. The N-linked (GlcNAc...) asparagine glycan is linked to N149. Disulfide bonds link C150–C161 and C179–C242. A substrate-binding site is contributed by D183. D184 provides a ligand contact to Mn(2+). D272 is a catalytic residue. Residue H296 coordinates Mn(2+).

It belongs to the glycosyltransferase 31 family. Mn(2+) serves as cofactor.

The protein resides in the golgi apparatus membrane. The catalysed reaction is 3-O-(alpha-L-fucosyl)-L-threonyl-[EGF-like domain protein] + UDP-N-acetyl-alpha-D-glucosamine = 3-O-(N-acetyl-beta-D-glucosaminyl-(1-&gt;3)-alpha-L-fucosyl)-L-threonyl-[EGF-like domain protein] + UDP + H(+). It catalyses the reaction 3-O-(alpha-L-fucosyl)-L-seryl-[EGF-like domain protein] + UDP-N-acetyl-alpha-D-glucosamine = 3-O-(N-acetyl-beta-D-glucosaminyl-(1-&gt;3)-alpha-L-fucosyl)-L-seryl-[EGF-like domain protein] + UDP + H(+). Functionally, glycosyltransferase that initiates the elongation of O-linked fucose residues attached to EGF-like repeats in the extracellular domain of Notch molecules. The sequence is that of Beta-1,3-N-acetylglucosaminyltransferase radical fringe (rfng) from Xenopus laevis (African clawed frog).